The sequence spans 381 residues: Endolytic peptidoglycan transglycosylase RlpA (381 aa).

The N-terminal stretch at 1 to 19 (MRKQLPVICVAAGIVLLAA) is a signal peptide. Residue Cys20 is the site of N-palmitoyl cysteine attachment. Cys20 carries S-diacylglycerol cysteine lipidation. The disordered stretch occupies residues 196 to 274 (LPPRPDLSGG…QPAPVSAPVA (79 aa)). The span at 208–218 (SASSAPAQPQG) shows a compositional bias: low complexity. The 77-residue stretch at 304 to 380 (AAASGRFVVQ…AQLQSFIASA (77 aa)) folds into the SPOR domain.

This sequence belongs to the RlpA family.

The protein resides in the cell membrane. In terms of biological role, lytic transglycosylase with a strong preference for naked glycan strands that lack stem peptides. This is Endolytic peptidoglycan transglycosylase RlpA from Salmonella typhimurium (strain LT2 / SGSC1412 / ATCC 700720).